Reading from the N-terminus, the 216-residue chain is Outer-membrane lipoprotein LolB (216 aa).

Residues 1–24 (MNNLNYFTKISASCAALALMTLAG) form the signal peptide. Cysteine 25 carries the N-palmitoyl cysteine lipid modification. Cysteine 25 is lipidated: S-diacylglycerol cysteine.

It belongs to the LolB family. Monomer.

The protein localises to the cell outer membrane. Functionally, plays a critical role in the incorporation of lipoproteins in the outer membrane after they are released by the LolA protein. The protein is Outer-membrane lipoprotein LolB of Shewanella loihica (strain ATCC BAA-1088 / PV-4).